Reading from the N-terminus, the 149-residue chain is Protein SprT-like (149 aa).

Residues 4–143 (TDYVKQVSLE…CGLCRGKLLL (140 aa)) enclose the SprT-like domain. His-64 contacts Zn(2+). Glu-65 is a catalytic residue. A Zn(2+)-binding site is contributed by His-68.

Belongs to the SprT family. The cofactor is Zn(2+).

It is found in the cytoplasm. This chain is Protein SprT-like, found in Streptococcus pneumoniae (strain Taiwan19F-14).